We begin with the raw amino-acid sequence, 442 residues long: Coiled-coil domain-containing protein 112 (442 aa).

2 coiled-coil regions span residues 23 to 116 (LEEL…RRIE) and 217 to 249 (LEEK…VDTV). 3 disordered regions span residues 245 to 272 (KVDT…KKQK), 289 to 312 (KLAS…QRQS), and 392 to 442 (EKVE…RQGI). Composition is skewed to basic and acidic residues over residues 256 to 268 (KAED…EEQR) and 294 to 310 (LREE…ERQR). The stretch at 281–400 (RKSLEMSAKL…KEKVENNVSR (120 aa)) forms a coiled coil.

The protein resides in the cytoplasm. It localises to the cytoskeleton. It is found in the microtubule organizing center. Its subcellular location is the centrosome. The protein localises to the centriolar satellite. The polypeptide is Coiled-coil domain-containing protein 112 (Ccdc112) (Mus musculus (Mouse)).